Here is a 226-residue protein sequence, read N- to C-terminus: Enolase-phosphatase E1 (226 aa).

Belongs to the HAD-like hydrolase superfamily. MasA/MtnC family. Monomer. Mg(2+) is required as a cofactor.

It catalyses the reaction 5-methylsulfanyl-2,3-dioxopentyl phosphate + H2O = 1,2-dihydroxy-5-(methylsulfanyl)pent-1-en-3-one + phosphate. It participates in amino-acid biosynthesis; L-methionine biosynthesis via salvage pathway; L-methionine from S-methyl-5-thio-alpha-D-ribose 1-phosphate: step 3/6. It functions in the pathway amino-acid biosynthesis; L-methionine biosynthesis via salvage pathway; L-methionine from S-methyl-5-thio-alpha-D-ribose 1-phosphate: step 4/6. In terms of biological role, bifunctional enzyme that catalyzes the enolization of 2,3-diketo-5-methylthiopentyl-1-phosphate (DK-MTP-1-P) into the intermediate 2-hydroxy-3-keto-5-methylthiopentenyl-1-phosphate (HK-MTPenyl-1-P), which is then dephosphorylated to form the acireductone 1,2-dihydroxy-3-keto-5-methylthiopentene (DHK-MTPene). In Shewanella oneidensis (strain ATCC 700550 / JCM 31522 / CIP 106686 / LMG 19005 / NCIMB 14063 / MR-1), this protein is Enolase-phosphatase E1.